Reading from the N-terminus, the 464-residue chain is Siroheme synthase (464 aa).

Residues 1-203 (MDYLPLFHKL…GQGAEAERLL (203 aa)) form a precorrin-2 dehydrogenase /sirohydrochlorin ferrochelatase region. Residues 22 to 23 (EI) and 43 to 44 (PE) each bind NAD(+). Ser128 carries the phosphoserine modification. The tract at residues 216 to 464 (GEVYLVGAGP…AWFEGSQQDQ (249 aa)) is uroporphyrinogen-III C-methyltransferase. Pro225 contacts S-adenosyl-L-methionine. Asp248 functions as the Proton acceptor in the catalytic mechanism. The active-site Proton donor is the Lys270. S-adenosyl-L-methionine contacts are provided by residues 301–303 (GGD), Ile306, 331–332 (TA), Met383, and Gly412.

In the N-terminal section; belongs to the precorrin-2 dehydrogenase / sirohydrochlorin ferrochelatase family. It in the C-terminal section; belongs to the precorrin methyltransferase family.

The catalysed reaction is uroporphyrinogen III + 2 S-adenosyl-L-methionine = precorrin-2 + 2 S-adenosyl-L-homocysteine + H(+). It catalyses the reaction precorrin-2 + NAD(+) = sirohydrochlorin + NADH + 2 H(+). The enzyme catalyses siroheme + 2 H(+) = sirohydrochlorin + Fe(2+). Its pathway is cofactor biosynthesis; adenosylcobalamin biosynthesis; precorrin-2 from uroporphyrinogen III: step 1/1. It participates in cofactor biosynthesis; adenosylcobalamin biosynthesis; sirohydrochlorin from precorrin-2: step 1/1. It functions in the pathway porphyrin-containing compound metabolism; siroheme biosynthesis; precorrin-2 from uroporphyrinogen III: step 1/1. The protein operates within porphyrin-containing compound metabolism; siroheme biosynthesis; siroheme from sirohydrochlorin: step 1/1. Its pathway is porphyrin-containing compound metabolism; siroheme biosynthesis; sirohydrochlorin from precorrin-2: step 1/1. Its function is as follows. Multifunctional enzyme that catalyzes the SAM-dependent methylations of uroporphyrinogen III at position C-2 and C-7 to form precorrin-2 via precorrin-1. Then it catalyzes the NAD-dependent ring dehydrogenation of precorrin-2 to yield sirohydrochlorin. Finally, it catalyzes the ferrochelation of sirohydrochlorin to yield siroheme. In Pseudomonas putida (strain W619), this protein is Siroheme synthase.